We begin with the raw amino-acid sequence, 345 residues long: Anthranilate phosphoribosyltransferase (345 aa).

5-phospho-alpha-D-ribose 1-diphosphate contacts are provided by residues G84, 87-88, T92, 94-97, 112-120, and S124; these read GD, NIST, and KHGGRGVSS. Residue G84 coordinates anthranilate. S96 contributes to the Mg(2+) binding site. R170 is a binding site for anthranilate. Mg(2+) contacts are provided by D229 and E230.

It belongs to the anthranilate phosphoribosyltransferase family. In terms of assembly, homodimer. The cofactor is Mg(2+).

The enzyme catalyses N-(5-phospho-beta-D-ribosyl)anthranilate + diphosphate = 5-phospho-alpha-D-ribose 1-diphosphate + anthranilate. Its pathway is amino-acid biosynthesis; L-tryptophan biosynthesis; L-tryptophan from chorismate: step 2/5. Functionally, catalyzes the transfer of the phosphoribosyl group of 5-phosphorylribose-1-pyrophosphate (PRPP) to anthranilate to yield N-(5'-phosphoribosyl)-anthranilate (PRA). This is Anthranilate phosphoribosyltransferase from Paracidovorax citrulli (strain AAC00-1) (Acidovorax citrulli).